A 218-amino-acid polypeptide reads, in one-letter code: UPF0502 protein Geob_1184 (218 aa).

The protein belongs to the UPF0502 family.

This Geotalea daltonii (strain DSM 22248 / JCM 15807 / FRC-32) (Geobacter daltonii) protein is UPF0502 protein Geob_1184.